We begin with the raw amino-acid sequence, 172 residues long: 3-hydroxydecanoyl-[acyl-carrier-protein] dehydratase (172 aa).

H71 is an active-site residue.

It belongs to the thioester dehydratase family. FabA subfamily. Homodimer.

The protein resides in the cytoplasm. It catalyses the reaction a (3R)-hydroxyacyl-[ACP] = a (2E)-enoyl-[ACP] + H2O. The catalysed reaction is (3R)-hydroxydecanoyl-[ACP] = (2E)-decenoyl-[ACP] + H2O. The enzyme catalyses (2E)-decenoyl-[ACP] = (3Z)-decenoyl-[ACP]. Its pathway is lipid metabolism; fatty acid biosynthesis. Its function is as follows. Necessary for the introduction of cis unsaturation into fatty acids. Catalyzes the dehydration of (3R)-3-hydroxydecanoyl-ACP to E-(2)-decenoyl-ACP and then its isomerization to Z-(3)-decenoyl-ACP. Can catalyze the dehydratase reaction for beta-hydroxyacyl-ACPs with saturated chain lengths up to 16:0, being most active on intermediate chain length. This is 3-hydroxydecanoyl-[acyl-carrier-protein] dehydratase from Escherichia coli O139:H28 (strain E24377A / ETEC).